A 242-amino-acid polypeptide reads, in one-letter code: Uridylate kinase (242 aa).

17-20 contacts ATP; the sequence is KLSG. Gly-59 contributes to the UMP binding site. ATP contacts are provided by Gly-60 and Arg-64. Residues Asp-79 and 140–147 each bind UMP; that span reads LGNPFFTT. Positions 167, 173, and 176 each coordinate ATP.

Belongs to the UMP kinase family. As to quaternary structure, homohexamer.

It is found in the cytoplasm. It carries out the reaction UMP + ATP = UDP + ADP. It participates in pyrimidine metabolism; CTP biosynthesis via de novo pathway; UDP from UMP (UMPK route): step 1/1. With respect to regulation, inhibited by UTP. Its function is as follows. Catalyzes the reversible phosphorylation of UMP to UDP. The sequence is that of Uridylate kinase from Buchnera aphidicola subsp. Baizongia pistaciae (strain Bp).